We begin with the raw amino-acid sequence, 369 residues long: Core histone macro-H2A.1 (369 aa).

One can recognise a Histone H2A domain in the interval 2–117 (SSRGGKKKST…NIHPELLAKK (116 aa)). N6-lactoyllysine; alternate occurs at positions 7 and 9. Lysine 18 bears the N6-methyllysine mark. At lysine 116 the chain carries N6-acetyllysine; alternate. Residue lysine 116 forms a Glycyl lysine isopeptide (Lys-Gly) (interchain with G-Cter in ubiquitin); alternate linkage. Lysine 117 is covalently cross-linked (Glycyl lysine isopeptide (Lys-Gly) (interchain with G-Cter in ubiquitin)). Residue lysine 123 is modified to N6-acetyllysine; alternate. Lysine 123 bears the N6,N6-dimethyllysine; alternate mark. Lysine 123 is covalently cross-linked (Glycyl lysine isopeptide (Lys-Gly) (interchain with G-Cter in SUMO2); alternate). Positions 128–180 (ITPPPAKKAKSPSQKKPVAKKTGGKKGARKSKKKQGEVSKAASADSTTEGTPT) are disordered. Threonine 129 bears the Phosphothreonine mark. Over residues 144 to 160 (PVAKKTGGKKGARKSKK) the composition is skewed to basic residues. Lysine 167 is covalently cross-linked (Glycyl lysine isopeptide (Lys-Gly) (interchain with G-Cter in SUMO2)). Phosphoserine occurs at positions 170 and 173. Residue threonine 178 is modified to Phosphothreonine. The Macro domain maps to 184-367 (TVLSTKSLFL…IYVQEMAKLD (184 aa)). Lysine 189 participates in a covalent cross-link: Glycyl lysine isopeptide (Lys-Gly) (interchain with G-Cter in SUMO2). A glycoprotein contacts are provided by aspartate 203, isoleucine 204, valine 226, serine 275, glycine 312, serine 313, glycine 314, and asparagine 316. A Glycyl lysine isopeptide (Lys-Gly) (interchain with G-Cter in SUMO2) cross-link involves residue lysine 320.

This sequence belongs to the histone H2A family. In terms of assembly, the nucleosome is a histone octamer containing two molecules each of H2A, H2B, H3 and H4 assembled in one H3-H4 heterotetramer and two H2A-H2B heterodimers. Interacts with HDAC1 and HDAC2. Interacts with SPOP. Part of a complex consisting of MACROH2A1, CUL3 and SPOP. Interacts with PARP1. Monoubiquitinated at either Lys-116 or Lys-117. May also be polyubiquitinated. Ubiquitination is mediated by the CUL3/SPOP E3 complex and does not promote proteasomal degradation. Instead, it is required for enrichment in inactive X chromosome chromatin. In terms of tissue distribution, widely expressed, with high levels in testis. Present in liver, kidney and adrenal gland (at protein level). In the liver, present in hepatocytes and at a lesser extent in cells of the bile ducts. In the kidney, expressed in proximal and distal convoluted tubules and in straight proximal tubules. In the adrenal gland, present in inner cells of the cortex and medulla.

The protein localises to the nucleus. It is found in the chromosome. Functionally, variant histone H2A which replaces conventional H2A in a subset of nucleosomes where it represses transcription. Nucleosomes wrap and compact DNA into chromatin, limiting DNA accessibility to the cellular machineries which require DNA as a template. Histones thereby play a central role in transcription regulation, DNA repair, DNA replication and chromosomal stability. DNA accessibility is regulated via a complex set of post-translational modifications of histones, also called histone code, and nucleosome remodeling. Involved in stable X chromosome inactivation. Inhibits the binding of transcription factors, including NF-kappa-B, and interferes with the activity of remodeling SWI/SNF complexes. Inhibits histone acetylation by EP300 and recruits class I HDACs, which induces a hypoacetylated state of chromatin. In terms of biological role, isoform that specifically binds poly-ADP-ribose and O-acetyl-ADP-ribose and plays a key role in NAD(+) metabolism. Able to bind to the ends of poly-ADP-ribose chains created by PARP1 and cap them. This prevents PARP1 from further addition of ADP-ribose and thus limits the consumption of nuclear NAD(+), allowing the cell to maintain proper NAD(+) levels in both the nucleus and the mitochondria to promote proper mitochondrial respiration. Increases the expression of genes involved in redox metabolism, including SOD3. In contrast to isoform 1, does not bind poly-ADP-ribose. Represses SOD3 gene expression. The polypeptide is Core histone macro-H2A.1 (Mus musculus (Mouse)).